The following is a 135-amino-acid chain: Large-conductance mechanosensitive channel (135 aa).

2 consecutive transmembrane segments (helical) span residues 9–29 (AFAARGNVIDMAVGIIIGAAF) and 79–99 (IQTIIDFLIISFAIFMGLKAI).

This sequence belongs to the MscL family. As to quaternary structure, homopentamer.

It localises to the cell inner membrane. Its function is as follows. Channel that opens in response to stretch forces in the membrane lipid bilayer. May participate in the regulation of osmotic pressure changes within the cell. In Aeromonas salmonicida (strain A449), this protein is Large-conductance mechanosensitive channel.